The primary structure comprises 78 residues: Small ribosomal subunit protein bS21A (78 aa).

A compositionally biased stretch (basic and acidic residues) spans 30–52; sequence MKARSAYEKPSEKRAREKGEAVR. The interval 30–78 is disordered; it reads MKARSAYEKPSEKRAREKGEAVRRQRKLARKKLQREGLLPAPKKAVRAR. The segment covering 53-62 has biased composition (basic residues); sequence RQRKLARKKL.

Belongs to the bacterial ribosomal protein bS21 family.

In Rhizobium etli (strain ATCC 51251 / DSM 11541 / JCM 21823 / NBRC 15573 / CFN 42), this protein is Small ribosomal subunit protein bS21A.